We begin with the raw amino-acid sequence, 665 residues long: Cysteine-rich receptor-like protein kinase 26 (665 aa).

Residues 1–22 form the signal peptide; sequence MLSLLLPLISLLFQIQCFTVKS. The Extracellular portion of the chain corresponds to 23–283; it reads QPVPLNQICS…GDKNRGVPKA (261 aa). Gnk2-homologous domains follow at residues 26-129 and 135-244; these read PLNQ…NRTI and ISPH…PWRF. N-linked (GlcNAc...) asparagine glycosylation is found at N33, N37, N67, N126, N146, and N266. Residues 251 to 275 are disordered; sequence DDPSSVPATPSRPPKNETRSVTQGD. Residues 284 to 304 form a helical membrane-spanning segment; that stretch reads LIFASASVAIVVLFIVLLVVF. At 305–665 the chain is on the cytoplasmic side; the sequence is LKLRRKENIR…YNSNTELYPR (361 aa). In terms of domain architecture, Protein kinase spans 344 to 624; it reads FSLENKLGEG…VLMLDGHTIA (281 aa). ATP is bound by residues 350–358 and K372; that span reads LGEGGFGAV. Y417 is subject to Phosphotyrosine. The active-site Proton acceptor is the D469. Phosphoserine is present on S473. T510 bears the Phosphothreonine mark. Phosphotyrosine is present on Y518. A disordered region spans residues 641-665; the sequence is SDSSSSLGHNAKTSNYNSNTELYPR. Over residues 647–665 the composition is skewed to polar residues; the sequence is LGHNAKTSNYNSNTELYPR.

Belongs to the protein kinase superfamily. Ser/Thr protein kinase family. CRK subfamily.

The protein localises to the membrane. It carries out the reaction L-seryl-[protein] + ATP = O-phospho-L-seryl-[protein] + ADP + H(+). It catalyses the reaction L-threonyl-[protein] + ATP = O-phospho-L-threonyl-[protein] + ADP + H(+). This is Cysteine-rich receptor-like protein kinase 26 (CRK26) from Arabidopsis thaliana (Mouse-ear cress).